We begin with the raw amino-acid sequence, 853 residues long: MICAL-like protein 1 (853 aa).

Residues 2–108 form the Calponin-homology (CH) domain; sequence AGPRGALLAW…YVSQYYNHFA (107 aa). Disordered regions lie at residues 118-162 and 224-659; these read PRKG…TPSS and SGRS…FPLI. Positions 145–162 are enriched in polar residues; that stretch reads ECSSGSLSKQGSHRTPSS. The LIM zinc-binding domain maps to 162 to 224; the sequence is STCAACQQHV…AEHCARLGPS (63 aa). Phosphoserine is present on residues serine 292 and serine 306. Phosphothreonine is present on residues threonine 312 and threonine 315. A compositionally biased stretch (basic and acidic residues) spans 355–366; that stretch reads LSERTPAPRKDP. Positions 381 to 394 are enriched in pro residues; sequence APLPPSSSPGPPPG. Serine 388 is subject to Phosphoserine. Residues 419-421 carry the NPF1 motif; that stretch reads NPF. Residues 429 to 445 show a composition bias toward pro residues; that stretch reads PAAPSPAPGPAPTPPES. Phosphothreonine occurs at positions 457 and 459. Phosphoserine is present on residues serine 460, serine 461, serine 474, and serine 476. Low complexity-rich tracts occupy residues 495-515 and 541-553; these read PSPA…APSE and SASL…LSSS. Phosphoserine occurs at positions 568 and 611. The span at 607–618 shows a compositional bias: polar residues; sequence PGTSSPQLQVKS. The NPF2 motif lies at 623–625; sequence NPF. The interval 642–853 is mediates the interaction with RAB13 and RAB35 and intramolecular interaction with the CH domain; it reads KGSKPARPPA…TKSKCPGDRS (212 aa). The region spanning 661-808 is the bMERB domain; it reads RKVQSDQYIP…EEEEDKMLEA (148 aa). A coiled-coil region spans residues 671-701; it reads EEDIHGEIDTIERQLDALEHRGVLLEEKLRG. Positions 690–853 are necessary and sufficient to associate with tubular recycling endosome membranes, mediate phosphatidic acid-binding and membrane tubulation; that stretch reads HRGVLLEEKL…TKSKCPGDRS (164 aa). The residue at position 730 (serine 730) is a Phosphoserine. Positions 791–820 form a coiled coil; the sequence is CLDEDRQREEEEDKMLEAMIKKKEFQKETE.

Homooligomer. Interacts (via NPF1 motif) with EHD1 (via EH domain); the interaction is direct and probably recruits EHD1 to membranes. Interacts with EHD3 (via EH domain). Interacts with RAB35 (GTP-bound form); the interaction is direct and probably recruits MICALL1 to membranes. Interacts with ACAP2; the interaction is indirect through RAB35. Interacts with RAB8A (GTP-bound form); regulates RAB8A association with recycling endosomes. Interacts with RAB13 (GTP-bound form). Interacts with ARF6 (GTP-bound form). Interacts with PACSIN2 (via the SH3 domain). Interacts with DPYSL2.

The protein localises to the recycling endosome membrane. It localises to the late endosome membrane. It is found in the cell projection. The protein resides in the cilium membrane. Its subcellular location is the cytoplasm. The protein localises to the cytoskeleton. It localises to the microtubule organizing center. It is found in the centrosome. The protein resides in the centriole. Lipid-binding protein with higher affinity for phosphatidic acid, a lipid enriched in recycling endosome membranes. On endosome membranes, acts as a downstream effector of Rab proteins recruiting cytosolic proteins to regulate membrane tubulation. Involved in a late step of receptor-mediated endocytosis regulating for instance endocytosed-EGF receptor trafficking. Alternatively, regulates slow endocytic recycling of endocytosed proteins back to the plasma membrane. Also involved in cargo protein delivery to the plasma membrane. Plays a role in ciliogenesis coordination, recruits EHD1 to primary cilium where it is anchored to the centriole through interaction with tubulins. May indirectly play a role in neurite outgrowth. The sequence is that of MICAL-like protein 1 (MICALL1) from Bos taurus (Bovine).